We begin with the raw amino-acid sequence, 1192 residues long: Probable phospholipid-transporting ATPase IM (1192 aa).

The Cytoplasmic portion of the chain corresponds to 1–44; sequence MFCSEKKLREVERIVKANDREYNEKFQYADNRIHTSKYNILTFL. Residues 45–66 form a helical membrane-spanning segment; the sequence is PINLFEQFQRVANAYFLCLLIL. At 67 to 72 the chain is on the exoplasmic loop side; that stretch reads QLIPEI. Residues 73–92 traverse the membrane as a helical segment; it reads SSLTWFTTIVPLVLVITMTA. The Cytoplasmic portion of the chain corresponds to 93-276; that stretch reads VKDATDDYFR…TSIDRLMNTL (184 aa). Residues 277–298 form a helical membrane-spanning segment; it reads VLWIFGFLICLGIILAIGNSIW. The Exoplasmic loop portion of the chain corresponds to 299 to 327; the sequence is ESQTGDQFRTFLFWNEGEKSSVFSGFLTF. The chain crosses the membrane as a helical span at residues 328–349; the sequence is WSYIIILNTVVPISLYVSVEVI. The Cytoplasmic segment spans residues 350–871; that stretch reads RLGHSYFINW…GRWSYFRMCK (522 aa). Asp392 serves as the catalytic 4-aspartylphosphate intermediate. 12 residues coordinate ATP: Asp392, Lys393, Thr394, Glu496, Phe537, Lys560, Arg594, Thr674, Gly675, Asp676, Arg789, and Lys795. Asp392 contacts Mg(2+). Mg(2+) is bound at residue Thr394. Residue Asp815 coordinates Mg(2+). Positions 818 and 819 each coordinate ATP. Position 819 (Asp819) interacts with Mg(2+). The chain crosses the membrane as a helical span at residues 872-892; it reads FLCYFFYKNFAFTLVHFWFGF. Residues 893 to 904 are Exoplasmic loop-facing; sequence FCGFSAQTVYDQ. The helical transmembrane segment at 905–924 threads the bilayer; it reads WFITLFNIVYTSLPVLAMGI. Topologically, residues 925–954 are cytoplasmic; the sequence is FDQDVSDQNSVDCPQLYKPGQLNLLFNKRK. The chain crosses the membrane as a helical span at residues 955 to 976; sequence FFICVLHGIYTSLVLFFIPYGA. The Exoplasmic loop portion of the chain corresponds to 977-990; it reads FYNVAGEDGQHIAD. A helical membrane pass occupies residues 991 to 1013; sequence YQSFAVTMATSLVIVVSVQIALD. Over 1014 to 1019 the chain is Cytoplasmic; it reads TSYWTF. A helical transmembrane segment spans residues 1020–1040; it reads INHVFIWGSIAIYFSILFTMH. Topologically, residues 1041 to 1060 are exoplasmic loop; that stretch reads SNGIFGIFPNQFPFVGNARH. The helical transmembrane segment at 1061–1085 threads the bilayer; that stretch reads SLTQKCIWLVILLTTVASVMPVVAF. The Cytoplasmic portion of the chain corresponds to 1086-1192; that stretch reads RFLKVDLYPT…SFSQDKTVKL (107 aa). Basic residues predominate over residues 1104 to 1125; it reads QKAQKKARPPSSRRPRTRRSSS. Disordered regions lie at residues 1104–1130 and 1143–1163; these read QKAQ…RSGY and TSGK…EKTH.

It belongs to the cation transport ATPase (P-type) (TC 3.A.3) family. Type IV subfamily. As to quaternary structure, component of a P4-ATPase flippase complex which consists of a catalytic alpha subunit and an accessory beta subunit. Interacts with beta subunits TMEM30A and TMEM30B. Requires Mg(2+) as cofactor. As to expression, ubiquitously expressed at moderate levels.

The protein resides in the cell membrane. Its subcellular location is the golgi apparatus. The catalysed reaction is ATP + H2O + phospholipidSide 1 = ADP + phosphate + phospholipidSide 2.. In terms of biological role, component of a P4-ATPase flippase complex which catalyzes the hydrolysis of ATP coupled to the transport of aminophospholipids from the outer to the inner leaflet of various membranes and ensures the maintenance of asymmetric distribution of phospholipids. Phospholipid translocation also seems to be implicated in vesicle formation and in uptake of lipid signaling molecules. The sequence is that of Probable phospholipid-transporting ATPase IM (ATP8B4) from Homo sapiens (Human).